Consider the following 146-residue polypeptide: Hemoglobin subunit beta (146 aa).

The 145-residue stretch at 2-146 (QWTAEEKQLI…VAHALARKYH (145 aa)) folds into the Globin domain. Positions 63 and 92 each coordinate heme b.

The protein belongs to the globin family. As to quaternary structure, heterotetramer of two alpha chains and two beta chains. As to expression, red blood cells.

Functionally, involved in oxygen transport from the lung to the various peripheral tissues. This is Hemoglobin subunit beta (HBB) from Sturnus vulgaris (Starling).